The following is a 171-amino-acid chain: MHHVVSATTNPAKIQAILQAFNEIFGEGSCHIESVSVESGVPEQPFGSEETRAGARNRVANARLVQPSADFWVAIEAGIDDGSTFSWVVIESADRRGEARSATLPLPEVILEQVRAGEALGPVMSQYTGIDQIGRKEGAIGVFTGGKLTRSSVYHQAVVLALSPFHNAIYR.

Thr-8 to Lys-13 serves as a coordination point for substrate. A Mg(2+)-binding site is contributed by Glu-38.

The protein belongs to the YjjX NTPase family. As to quaternary structure, homodimer. It depends on Mg(2+) as a cofactor. Mn(2+) serves as cofactor.

It catalyses the reaction XTP + H2O = XDP + phosphate + H(+). The catalysed reaction is ITP + H2O = IDP + phosphate + H(+). Functionally, phosphatase that hydrolyzes non-canonical purine nucleotides such as XTP and ITP to their respective diphosphate derivatives. Probably excludes non-canonical purines from DNA/RNA precursor pool, thus preventing their incorporation into DNA/RNA and avoiding chromosomal lesions. This Klebsiella pneumoniae (strain 342) protein is Inosine/xanthosine triphosphatase.